The chain runs to 466 residues: Soluble pyridine nucleotide transhydrogenase (466 aa).

36–45 is a binding site for FAD; the sequence is ERYQNVGGGC.

Belongs to the class-I pyridine nucleotide-disulfide oxidoreductase family. Homooligomer; probable homooctamer. FAD is required as a cofactor.

It localises to the cytoplasm. The catalysed reaction is NAD(+) + NADPH = NADH + NADP(+). In terms of biological role, conversion of NADPH, generated by peripheral catabolic pathways, to NADH, which can enter the respiratory chain for energy generation. This chain is Soluble pyridine nucleotide transhydrogenase, found in Escherichia coli O157:H7.